Here is a 146-residue protein sequence, read N- to C-terminus: Protein archease (146 aa).

Ca(2+)-binding residues include D16, D145, and I146.

It belongs to the archease family.

In terms of biological role, activates the tRNA-splicing ligase complex by facilitating the enzymatic turnover of catalytic subunit RtcB. Acts by promoting the guanylylation of RtcB, a key intermediate step in tRNA ligation. Can also alter the NTP specificity of RtcB such that ATP, dGTP or ITP is used efficiently. The chain is Protein archease from Methanosarcina acetivorans (strain ATCC 35395 / DSM 2834 / JCM 12185 / C2A).